Reading from the N-terminus, the 1250-residue chain is Myosin-1 (1250 aa).

The interval 1-43 (MGHSRRPAGGEKKSRGFGRSKAAADVGDGRQTGGKPQVKKATF) is disordered. The region spanning 51-730 (IGVSDLTLLS…TLFALEAMRD (680 aa)) is the Myosin motor domain. 144–151 (GESGAGKT) contacts ATP. At Ser-372 the chain carries Phosphoserine. Positions 419–501 (SIGILDIYGF…PGVFAALNDA (83 aa)) are actin-binding. 2 consecutive IQ domains span residues 734-754 (HNMA…RTEC) and 755-780 (AIRI…QGHQ). The 191-residue stretch at 788-978 (RRRMSLLGSR…TIHTGPGEPA (191 aa)) folds into the TH1 domain. Disordered regions lie at residues 962–1079 (DDSY…PKKP) and 1126–1250 (WTPE…DDDW). Pro residues predominate over residues 1021–1035 (AAQPLPRATPQPAAP). Positions 1036 to 1051 (QPAARAVPQPVAAVAA) are enriched in low complexity. 2 stretches are compositionally biased toward pro residues: residues 1064–1077 (APPP…PAPK) and 1139–1151 (TPKP…PPAA). The SH3 domain maps to 1076–1137 (PKKPTAKVLY…PEAYLEEQVA (62 aa)). Residues 1152–1170 (PRSTPAPATNGAAAAAKAK) are compositionally biased toward low complexity. The segment covering 1201-1222 (VSMNSHDSSGGSGRGTPNSMSN) has biased composition (polar residues). Positions 1223-1232 (ASLAGGLAEA) are enriched in low complexity.

This sequence belongs to the TRAFAC class myosin-kinesin ATPase superfamily. Myosin family. In terms of processing, phosphorylation of the TEDS site (Ser-372) is required for the polarization of the actin cytoskeleton. Phosphorylation probably activates the myosin-I ATPase activity.

The protein localises to the cytoplasm. The protein resides in the cytoskeleton. It localises to the actin patch. Functionally, type-I myosin implicated in the organization of the actin cytoskeleton. Required for proper actin cytoskeleton polarization. At the cell cortex, assembles in patch-like structures together with proteins from the actin-polymerizing machinery and promotes actin assembly. Functions as actin nucleation-promoting factor (NPF) for the Arp2/3 complex. Plays an important role in polarized growth, spore germination, hyphal morphogenesis, and septal wall formation. This Neosartorya fischeri (strain ATCC 1020 / DSM 3700 / CBS 544.65 / FGSC A1164 / JCM 1740 / NRRL 181 / WB 181) (Aspergillus fischerianus) protein is Myosin-1 (myoA).